The following is a 558-amino-acid chain: uncharacterized protein (558 aa).

A compositionally biased stretch (low complexity) spans 338–354 (STSTSTSTSTSSSNDLN). The interval 338–380 (STSTSTSTSTSSSNDLNLDSDSDDSDSDDSDSDSDSDSDSEID) is disordered. The segment covering 355–380 (LDSDSDDSDSDDSDSDSDSDSDSEID) has biased composition (acidic residues).

It is found in the plastid. This is an uncharacterized protein from Euglena longa (Euglenophycean alga).